A 1425-amino-acid polypeptide reads, in one-letter code: Ferlin 1 (1425 aa).

C2 domains follow at residues 1-123, 161-281, and 506-629; these read MAAK…RQWV, VNEG…PRWF, and TKAG…PVWL. The segment at 871–952 is disordered; sequence RPQASRLSRE…ALAASPEEET (82 aa). Basic and acidic residues-rich tracts occupy residues 877–889 and 912–926; these read LSREGTSRDERGK and ETEKKGDPVAEKKEG. C2 domains follow at residues 1032-1160 and 1192-1319; these read EMDA…EQMV and RADY…QQHY. The helical transmembrane segment at 1404–1424 threads the bilayer; that stretch reads TGVWMTVAGIIALVIFVMFLL.

It belongs to the ferlin family.

It localises to the golgi apparatus. The protein resides in the trans-Golgi network membrane. The protein localises to the endosome membrane. Its subcellular location is the cytoplasm. Plays a role in microneme replenishment, probably at the vesicular trafficking level. Directs microneme organelle traffic differentially based on microneme population. Regulates microneme secretion: facilitates microneme membrane fusion with the plasma membrane. The sequence is that of Ferlin 1 from Toxoplasma gondii.